The primary structure comprises 95 residues: Aspartyl/glutamyl-tRNA(Asn/Gln) amidotransferase subunit C (95 aa).

This sequence belongs to the GatC family. Heterotrimer of A, B and C subunits.

The enzyme catalyses L-glutamyl-tRNA(Gln) + L-glutamine + ATP + H2O = L-glutaminyl-tRNA(Gln) + L-glutamate + ADP + phosphate + H(+). It catalyses the reaction L-aspartyl-tRNA(Asn) + L-glutamine + ATP + H2O = L-asparaginyl-tRNA(Asn) + L-glutamate + ADP + phosphate + 2 H(+). Allows the formation of correctly charged Asn-tRNA(Asn) or Gln-tRNA(Gln) through the transamidation of misacylated Asp-tRNA(Asn) or Glu-tRNA(Gln) in organisms which lack either or both of asparaginyl-tRNA or glutaminyl-tRNA synthetases. The reaction takes place in the presence of glutamine and ATP through an activated phospho-Asp-tRNA(Asn) or phospho-Glu-tRNA(Gln). This chain is Aspartyl/glutamyl-tRNA(Asn/Gln) amidotransferase subunit C, found in Nitrobacter hamburgensis (strain DSM 10229 / NCIMB 13809 / X14).